A 317-amino-acid chain; its full sequence is L-lactate dehydrogenase (317 aa).

NAD(+) contacts are provided by residues Val-16, Asp-37, Lys-42, Tyr-68, and 82–83 (GA). The substrate site is built by Gln-85 and Arg-91. NAD(+) is bound by residues Thr-104, 121–123 (ATN), and Ser-146. Substrate is bound at residue 123–126 (NPVD). 151–154 (DTAR) lines the substrate pocket. The beta-D-fructose 1,6-bisphosphate site is built by Arg-156 and His-171. The Proton acceptor role is filled by His-178. Tyr-222 bears the Phosphotyrosine mark. Residue Thr-231 participates in substrate binding.

This sequence belongs to the LDH/MDH superfamily. LDH family. In terms of assembly, homotetramer.

It localises to the cytoplasm. The enzyme catalyses (S)-lactate + NAD(+) = pyruvate + NADH + H(+). It participates in fermentation; pyruvate fermentation to lactate; (S)-lactate from pyruvate: step 1/1. Its activity is regulated as follows. Allosterically activated by fructose 1,6-bisphosphate (FBP). Functionally, catalyzes the conversion of lactate to pyruvate. This is L-lactate dehydrogenase from Corynebacterium efficiens (strain DSM 44549 / YS-314 / AJ 12310 / JCM 11189 / NBRC 100395).